We begin with the raw amino-acid sequence, 348 residues long: D-alanine--D-alanine ligase (348 aa).

The region spanning 132–334 (KRVLESIGIP…YPDLIEELVT (203 aa)) is the ATP-grasp domain. 162 to 217 (LARLTFPIFVKPANMGSSVGISKAQTKVELRKAIQLALTYDSRVLIEQGVVAREIE) is an ATP binding site. 3 residues coordinate Mg(2+): D288, E301, and N303.

The protein belongs to the D-alanine--D-alanine ligase family. Mg(2+) serves as cofactor. It depends on Mn(2+) as a cofactor.

Its subcellular location is the cytoplasm. It carries out the reaction 2 D-alanine + ATP = D-alanyl-D-alanine + ADP + phosphate + H(+). It participates in cell wall biogenesis; peptidoglycan biosynthesis. In terms of biological role, cell wall formation. The sequence is that of D-alanine--D-alanine ligase from Streptococcus pyogenes serotype M18 (strain MGAS8232).